A 563-amino-acid polypeptide reads, in one-letter code: Inorganic phosphate transporter PT2 (563 aa).

2 disordered regions span residues 1 to 51 (MAPR…SGEE) and 67 to 96 (DGGA…PAYS). The Extracellular portion of the chain corresponds to 1–127 (MAPRYHSAAE…NGEKQSLLVP (127 aa)). A helical membrane pass occupies residues 128-148 (CLAVFSSNYNFTVTSIALFLM). Residues 149-168 (NQDPLYKDASDTVVGSSTVK) are Cytoplasmic-facing. The chain crosses the membrane as a helical span at residues 169–189 (MLSYAGAIVGMCTMGYLGDLI). The Extracellular portion of the chain corresponds to 190 to 192 (GRR). The chain crosses the membrane as a helical span at residues 193 to 213 (LAMILTLALVFIGALLSSICA). Topologically, residues 214 to 217 (WGDG) are cytoplasmic. The chain crosses the membrane as a helical span at residues 218–238 (VTVLVIMGVCRFVLGVGSGGV). Over 239 to 263 (YPLSAVSAAEGAGSEKSNDRSMRVS) the chain is Extracellular. A helical transmembrane segment spans residues 264 to 284 (WAYSMNVPGIMFPYIVALVLW). Over 285-291 (CTTHNVD) the chain is Cytoplasmic. A helical membrane pass occupies residues 292 to 312 (VCFRILLGFGALPALLIWLPA). Residues 313–342 (WRMKEDRAYVAKDFAKHLAGVFVSRSYWRQ) lie on the Extracellular side of the membrane. The helical transmembrane segment at 343 to 363 (LLGTGVCWLLYDVTAYGILLV) threads the bilayer. Topologically, residues 364 to 380 (QPEITQSIWGNSSSVTD) are cytoplasmic. Residues 381–401 (VIWQNIILNGMGIPGCFMGIL) traverse the membrane as a helical segment. The Extracellular segment spans residues 402–412 (VLKQMGVKWLQ). A helical transmembrane segment spans residues 413-433 (FWGFVGLAVSAFLMAATVEIL). Residues 434–440 (QGKAWAQ) lie on the Cytoplasmic side of the membrane. A helical transmembrane segment spans residues 441–461 (LVLLCIVNFFINWGASITTFI). Over 462-477 (LPSLVFPPEVRSTYSG) the chain is Extracellular. The helical transmembrane segment at 478–498 (ISAALGKIGAVGGIYTMKAIL) threads the bilayer. Over 499–504 (STGGLT) the chain is Cytoplasmic. The chain crosses the membrane as a helical span at residues 505–525 (PMMICAGVPSLAAAILTWFYV). Residues 526 to 563 (DPVPNTLRSSFLQCFGSLAGSCPFIDCRKFRRGSRAFE) are Extracellular-facing.

Belongs to the major facilitator superfamily. Phosphate:H(+) symporter (TC 2.A.1.9) family.

It is found in the cell membrane. The catalysed reaction is phosphate(in) = phosphate(out). Its function is as follows. Inorganic phosphate transporter. Activity is likely sodium-independent. Exhibits higher activity under acidic pH, implying that either the monovalent form of phosphate is the preferred substrate or the transport activity is H(+)-dependent. The sequence is that of Inorganic phosphate transporter PT2 from Toxoplasma gondii (strain ATCC 50861 / VEG).